Here is a 480-residue protein sequence, read N- to C-terminus: Dihydrolipoyllysine-residue acetyltransferase component 4 of pyruvate dehydrogenase complex, chloroplastic (480 aa).

The transit peptide at 1–53 (MAVSSSSFLSTASLTNSKSNISFASSVSPSLRSVVFRSTTPATSHRRSMTVRS) directs the protein to the chloroplast. Positions 55–133 (IREIFMPALS…AAIGLLAETE (79 aa)) constitute a Lipoyl-binding domain. Position 96 is an N6-lipoyllysine (Lys96). Disordered stretches follow at residues 140–168 (KSKAASKSSSSVAEAVVPSPPPVTSSPAP) and 224–245 (AGIAPSKSSIAPPPPPPPPVTA). Residues 142-156 (KAASKSSSSVAEAVV) show a composition bias toward low complexity. One can recognise a Peripheral subunit-binding (PSBD) domain in the interval 187 to 224 (VATPYAKKLAKQHKVDIESVAGTGPFGRITASDVETAA). A compositionally biased stretch (pro residues) spans 234–243 (APPPPPPPPV). His453 is an active-site residue.

Belongs to the 2-oxoacid dehydrogenase family. (R)-lipoate serves as cofactor.

The protein localises to the plastid. Its subcellular location is the chloroplast stroma. It carries out the reaction N(6)-[(R)-dihydrolipoyl]-L-lysyl-[protein] + acetyl-CoA = N(6)-[(R)-S(8)-acetyldihydrolipoyl]-L-lysyl-[protein] + CoA. Its function is as follows. The pyruvate dehydrogenase complex catalyzes the overall conversion of pyruvate to acetyl-CoA and CO(2). It contains multiple copies of three enzymatic components: pyruvate dehydrogenase (E1), dihydrolipoamide acetyltransferase (E2) and lipoamide dehydrogenase (E3). The polypeptide is Dihydrolipoyllysine-residue acetyltransferase component 4 of pyruvate dehydrogenase complex, chloroplastic (LTA2) (Arabidopsis thaliana (Mouse-ear cress)).